The chain runs to 171 residues: NADH-quinone oxidoreductase subunit C (171 aa).

The protein belongs to the complex I 30 kDa subunit family. In terms of assembly, NDH-1 is composed of 14 different subunits. Subunits NuoB, C, D, E, F, and G constitute the peripheral sector of the complex.

Its subcellular location is the cell membrane. The catalysed reaction is a quinone + NADH + 5 H(+)(in) = a quinol + NAD(+) + 4 H(+)(out). NDH-1 shuttles electrons from NADH, via FMN and iron-sulfur (Fe-S) centers, to quinones in the respiratory chain. The immediate electron acceptor for the enzyme in this species is believed to be ubiquinone. Couples the redox reaction to proton translocation (for every two electrons transferred, four hydrogen ions are translocated across the cytoplasmic membrane), and thus conserves the redox energy in a proton gradient. In Herpetosiphon aurantiacus (strain ATCC 23779 / DSM 785 / 114-95), this protein is NADH-quinone oxidoreductase subunit C.